The sequence spans 96 residues: Large ribosomal subunit protein eL14 (96 aa).

This sequence belongs to the eukaryotic ribosomal protein eL14 family.

The chain is Large ribosomal subunit protein eL14 from Sulfurisphaera tokodaii (strain DSM 16993 / JCM 10545 / NBRC 100140 / 7) (Sulfolobus tokodaii).